We begin with the raw amino-acid sequence, 890 residues long: Alanine--tRNA ligase (890 aa).

Residues His-572, His-576, Cys-674, and His-678 each contribute to the Zn(2+) site.

Belongs to the class-II aminoacyl-tRNA synthetase family. Requires Zn(2+) as cofactor.

It is found in the cytoplasm. The catalysed reaction is tRNA(Ala) + L-alanine + ATP = L-alanyl-tRNA(Ala) + AMP + diphosphate. Its function is as follows. Catalyzes the attachment of alanine to tRNA(Ala) in a two-step reaction: alanine is first activated by ATP to form Ala-AMP and then transferred to the acceptor end of tRNA(Ala). Also edits incorrectly charged Ser-tRNA(Ala) and Gly-tRNA(Ala) via its editing domain. This Prochlorococcus marinus (strain MIT 9211) protein is Alanine--tRNA ligase.